Consider the following 405-residue polypeptide: Aurora kinase A (405 aa).

2 stretches are compositionally biased toward polar residues: residues 32-82 (VPSQ…QLQA) and 91-110 (RSLNNTQKSEQPSSSAPGNN). A disordered region spans residues 32-127 (VPSQNPLSAN…KQKNEESKKR (96 aa)). Residues Ser-42 and Ser-52 each carry the phosphoserine modification. Residues 111–127 (SEKELATKQKNEESKKR) are compositionally biased toward basic and acidic residues. The Protein kinase domain maps to 134–384 (FEIGRPLGKG…LKDVLEHPWI (251 aa)). ATP is bound by residues Lys-144, Lys-163, and 212-214 (EYA). The active-site Proton acceptor is the Asp-257. A Glycyl lysine isopeptide (Lys-Gly) (interchain with G-Cter in SUMO2) cross-link involves residue Lys-259. ATP is bound by residues 261–262 (EN) and Asp-275. Positions 281–294 (HAPSSRRTTLCGTL) are activation segment. Phosphothreonine occurs at positions 288 and 289. Ser-343 bears the Phosphoserine mark. Positions 385-405 (MANSSKPSSSQKSKDSTSKQS) are disordered. Residues 396–405 (KSKDSTSKQS) are compositionally biased toward basic and acidic residues.

Belongs to the protein kinase superfamily. Ser/Thr protein kinase family. Aurora subfamily. As to quaternary structure, part of a complex composed of NEDD9, AURKA and CTTN; within the complex NEDD9 acts as a scaffold protein and is required for complex formation. Identified in a complex with AUNIP and NIN. Interacts with FBXL7. Interacts with CPEB1, JTB, TACC1, TPX2, PPP2CA, as well as with the protein phosphatase type 1 (PP1) isoforms PPP1CA, PPP1CB and PPP1CC. Also interacts with its substrates ARHGEF2, BORA, KIF2A, PARD3, and p53/TP53. Interaction with BORA promotes phosphorylation of PLK1. Interacts with CIMAP3. Interacts with GADD45A, competing with its oligomerization. Interacts (via C-terminus) with AUNIP (via C-terminus). Interacts with FRY; this interaction facilitates AURKA-mediated PLK1 phosphorylation. Interacts with SIRT2. Interacts with MYCN; interaction is phospho-independent and triggers AURKA activation; AURKA competes with FBXW7 for binding to unphosphorylated MYCN but not for binding to phosphorylated MYCN. Interacts with HNRNPU. Interacts with AAAS. Interacts with KLHL18 and CUL3. Interacts with FOXP1. Interacts with HDAC6; AURKA-mediated phosphorylation of HDAC6 promotes deacetylation of alpha-tubulin. Activated by phosphorylation at Thr-289; this brings about a change in the conformation of the activation segment. Phosphorylation at Thr-289 varies during the cell cycle and is highest during M phase. Autophosphorylated at Thr-289 upon TPX2 binding. Thr-289 can be phosphorylated by several kinases, including PAK and PKA. Protein phosphatase type 1 (PP1) binds AURKA and inhibits its activity by dephosphorylating Thr-289 during mitosis. Phosphorylation at Ser-343 decreases the kinase activity. PPP2CA controls degradation by dephosphorylating Ser-52 at the end of mitosis. Post-translationally, ubiquitinated by the E3 ubiquitin-protein ligase complex SCF(FBXL7) during mitosis, leading to its degradation by the proteasome. Ubiquitinated by CHFR, leading to its degradation by the proteasome. Ubiquitinated by the anaphase-promoting complex (APC), leading to its degradation by the proteasome. Ubiquitinated by the CUL3-KLHL18 ligase leading to its activation at the centrosome which is required for initiating mitotic entry. Ubiquitination mediated by CUL3-KLHL18 ligase does not lead to its degradation by the proteasome.

It localises to the cytoplasm. Its subcellular location is the cytoskeleton. The protein localises to the microtubule organizing center. The protein resides in the centrosome. It is found in the spindle pole. It localises to the centriole. Its subcellular location is the cell projection. The protein localises to the neuron projection. The protein resides in the cilium. It is found in the cilium basal body. It localises to the basolateral cell membrane. It catalyses the reaction L-seryl-[protein] + ATP = O-phospho-L-seryl-[protein] + ADP + H(+). It carries out the reaction L-threonyl-[protein] + ATP = O-phospho-L-threonyl-[protein] + ADP + H(+). Activation of CDK1, appears to be an upstream event of AURKA activation. Phosphatase inhibitor-2 (PPP1R2) and TPX2 act also as activators. Inactivated by the G2 checkpoint. Inhibited by GADD45A and p53/TP53, and through dephosphorylation by protein phosphatase type 1 (PP1). MLN8054 is also a potent and selective inhibitor. Activated during the early phase of cilia disassembly in the presence of CIMAP3. Inhibited by the small molecule inhibitor VX-680. In terms of biological role, mitotic serine/threonine kinase that contributes to the regulation of cell cycle progression. Associates with the centrosome and the spindle microtubules during mitosis and plays a critical role in various mitotic events including the establishment of mitotic spindle, centrosome duplication, centrosome separation as well as maturation, chromosomal alignment, spindle assembly checkpoint, and cytokinesis. Required for normal spindle positioning during mitosis and for the localization of NUMA1 and DCTN1 to the cell cortex during metaphase. Required for initial activation of CDK1 at centrosomes. Phosphorylates numerous target proteins, including ARHGEF2, BORA, BRCA1, CDC25B, DLGP5, HDAC6, KIF2A, LATS2, NDEL1, PARD3, PPP1R2, PLK1, RASSF1, TACC3, p53/TP53 and TPX2. Phosphorylates MCRS1 which is required for MCRS1-mediated kinetochore fiber assembly and mitotic progression. Regulates KIF2A tubulin depolymerase activity. Important for microtubule formation and/or stabilization. Required for normal axon formation. Plays a role in microtubule remodeling during neurite extension. Also acts as a key regulatory component of the p53/TP53 pathway, and particularly the checkpoint-response pathways critical for oncogenic transformation of cells, by phosphorylating and destabilizing p53/TP53. Phosphorylates its own inhibitors, the protein phosphatase type 1 (PP1) isoforms, to inhibit their activity. Inhibits cilia outgrowth. Required for cilia disassembly via phosphorylation of HDAC6 and subsequent deacetylation of alpha-tubulin. Regulates protein levels of the anti-apoptosis protein BIRC5 by suppressing the expression of the SCF(FBXL7) E3 ubiquitin-protein ligase substrate adapter FBXL7 through the phosphorylation of the transcription factor FOXP1. In Canis lupus familiaris (Dog), this protein is Aurora kinase A.